We begin with the raw amino-acid sequence, 240 residues long: Putative outer membrane protein RT0057 (240 aa).

The N-terminal stretch at 1-20 is a signal peptide; the sequence is MLKKLCVILFISSITINSHA.

This sequence belongs to the OmpW/AlkL family.

The protein localises to the cell outer membrane. This chain is Putative outer membrane protein RT0057, found in Rickettsia typhi (strain ATCC VR-144 / Wilmington).